Reading from the N-terminus, the 349-residue chain is Tribbles homolog 3 (349 aa).

An interaction with DDIT3/CHOP region spans residues Met1–Leu122. A disordered region spans residues Val35–Val57. The Protein kinase domain occupies Leu63–Leu310. The tract at residues Val317–Gly349 is disordered. A compositionally biased stretch (acidic residues) spans Gln336–Gly349.

This sequence belongs to the protein kinase superfamily. CAMK Ser/Thr protein kinase family. Tribbles subfamily. In terms of assembly, interacts with AKT1, AKT2, MAP2K1 and MAP2K7. Interacts with ATF4. Interacts with DDIT3/CHOP and inhibits its interaction with EP300/P300. Interacts with APOBEC3C. Interacts (via N-terminus) with APOBEC3A. Interacts with RELA. As to expression, detected only in the lung. Not detected in the heart, brain, spleen, liver, skeletal muscle, kidney and testis.

The protein localises to the nucleus. Its function is as follows. Inactive protein kinase which acts as a regulator of the integrated stress response (ISR), a process for adaptation to various stress. Inhibits the transcriptional activity of DDIT3/CHOP and is involved in DDIT3/CHOP-dependent cell death during ER stress. May play a role in programmed neuronal cell death but does not appear to affect non-neuronal cells. Acts as a negative feedback regulator of the ATF4-dependent transcription during the ISR: while TRIB3 expression is promoted by ATF4, TRIB3 protein interacts with ATF4 and inhibits ATF4 transcription activity. Disrupts insulin signaling by binding directly to Akt kinases and blocking their activation. May bind directly to and mask the 'Thr-308' phosphorylation site in AKT1. Interacts with the NF-kappa-B transactivator p65 RELA and inhibits its phosphorylation and thus its transcriptional activation activity. Interacts with MAPK kinases and regulates activation of MAP kinases. Can inhibit APOBEC3A editing of nuclear DNA. This is Tribbles homolog 3 (Trib3) from Rattus norvegicus (Rat).